The primary structure comprises 435 residues: Nucleoredoxin (435 aa).

Ser2 carries the post-translational modification N-acetylserine. The region spanning 167-321 (PKPFREVIAG…VLELSDSNAA (155 aa)) is the Thioredoxin domain.

This sequence belongs to the nucleoredoxin family. As to quaternary structure, associates with the phosphatase 2A holoenzyme. Interacts with PPP2CA; the interaction is direct. Interacts with DVL1 (via PDZ domain); the interaction is direct and regulated by oxidative stress.

It localises to the cytoplasm. Its subcellular location is the cytosol. The protein resides in the nucleus. The catalysed reaction is [protein]-dithiol + NAD(+) = [protein]-disulfide + NADH + H(+). It carries out the reaction [protein]-dithiol + NADP(+) = [protein]-disulfide + NADPH + H(+). Functions as a redox-dependent negative regulator of the Wnt signaling pathway, possibly by preventing ubiquitination of DVL3 by the BCR(KLHL12) complex. May also function as a transcriptional regulator act as a regulator of protein phosphatase 2A (PP2A). This Homo sapiens (Human) protein is Nucleoredoxin (NXN).